A 164-amino-acid polypeptide reads, in one-letter code: Crossover junction endodeoxyribonuclease RuvC (164 aa).

Active-site residues include D7, E67, and D140. D7, E67, and D140 together coordinate Mg(2+).

It belongs to the RuvC family. In terms of assembly, homodimer which binds Holliday junction (HJ) DNA. The HJ becomes 2-fold symmetrical on binding to RuvC with unstacked arms; it has a different conformation from HJ DNA in complex with RuvA. In the full resolvosome a probable DNA-RuvA(4)-RuvB(12)-RuvC(2) complex forms which resolves the HJ. Requires Mg(2+) as cofactor.

It is found in the cytoplasm. The catalysed reaction is Endonucleolytic cleavage at a junction such as a reciprocal single-stranded crossover between two homologous DNA duplexes (Holliday junction).. Its function is as follows. The RuvA-RuvB-RuvC complex processes Holliday junction (HJ) DNA during genetic recombination and DNA repair. Endonuclease that resolves HJ intermediates. Cleaves cruciform DNA by making single-stranded nicks across the HJ at symmetrical positions within the homologous arms, yielding a 5'-phosphate and a 3'-hydroxyl group; requires a central core of homology in the junction. The consensus cleavage sequence is 5'-(A/T)TT(C/G)-3'. Cleavage occurs on the 3'-side of the TT dinucleotide at the point of strand exchange. HJ branch migration catalyzed by RuvA-RuvB allows RuvC to scan DNA until it finds its consensus sequence, where it cleaves and resolves the cruciform DNA. In Finegoldia magna (strain ATCC 29328 / DSM 20472 / WAL 2508) (Peptostreptococcus magnus), this protein is Crossover junction endodeoxyribonuclease RuvC.